Consider the following 337-residue polypeptide: RAD51-associated protein 1 (337 aa).

2 disordered regions span residues 1 to 69 (MVRP…PPKK) and 88 to 337 (LSVK…SQVR). Phosphoserine occurs at positions 19 and 23. Polar residues predominate over residues 28 to 38 (ISSSTPVNKSK). An interaction with DNA region spans residues 32–50 (TPVNKSKTVPKVLKQDKPK). Over residues 44 to 69 (LKQDKPKPNLKNLQKEEVLPTEPPKK) the composition is skewed to basic and acidic residues. Phosphoserine is present on residues Ser103 and Ser107. Residues 105-118 (EKSTDKQGKEKTEN) show a composition bias toward basic and acidic residues. An SIM motif motif is present at residues 138 to 143 (LDKITE). Positions 190-205 (SESDPDFDESKESDED) are enriched in acidic residues. The tract at residues 225–286 (GEKKERKSKP…PSAESKRPKW (62 aa)) is interaction with DNA. Lys251 participates in a covalent cross-link: Glycyl lysine isopeptide (Lys-Gly) (interchain with G-Cter in SUMO; alternate). Residue Lys251 forms a Glycyl lysine isopeptide (Lys-Gly) (interchain with G-Cter in ubiquitin; alternate) linkage. The short motif at 286–289 (WVPP) is the WVPP motif element. Residues 290 to 304 (AASGSRNSSSNALAG) show a composition bias toward low complexity. The interval 295 to 334 (RNSSSNALAGTPAKSPSQSLRLGLSRLAPVKRLHPSATSS) is interaction with RAD51. The residue at position 309 (Ser309) is a Phosphoserine.

Monomer; elongated monodisperse monomer. Interacts (via C-terminal region) with RAD51; the interaction is direct. Interacts (via SIM motif) with WDR48/UAF1; WDR48/UAF1 and RAD51AP1 cooperate together to stimulate RAD51-mediated homologous recombination (HR). Interacts (via WVPP motif) with DMC1; the interaction is direct. Interacts with PALB2. Interacts with RAD52. In terms of processing, sumoylation with SUMO2/3 by NSMCE2/MMS21 promotes stabilization, possibly by preventing ubiquitination. As to expression, most abundantly expressed in testis. Also expressed in spleen, thymus and bone marrow. Not detected in heart, kidney or liver.

The protein localises to the chromosome. Its subcellular location is the nucleus. It localises to the telomere. Functionally, structure-specific DNA-binding protein involved in DNA repair by promoting RAD51-mediated homologous recombination. Acts by stimulating D-Loop formation by RAD51: specifically enhances joint molecule formation through its structure-specific DNA interaction and its interaction with RAD51. Binds single-stranded DNA (ssDNA), double-stranded DNA (dsDNA) and secondary DNA structures, such as D-loop structures: has a strong preference for branched-DNA structures that are obligatory intermediates during joint molecule formation. Cooperates with WDR48/UAF1 to stimulate RAD51-mediated homologous recombination: both WDR48/UAF1 and RAD51AP1 have coordinated role in DNA-binding during homologous recombination and DNA repair. WDR48/UAF1 and RAD51AP1 also have a coordinated role in DNA-binding to promote USP1-mediated deubiquitination of FANCD2. Also involved in meiosis by promoting DMC1-mediated homologous meiotic recombination. This chain is RAD51-associated protein 1, found in Mus musculus (Mouse).